We begin with the raw amino-acid sequence, 114 residues long: FK506-binding protein 1 (114 aa).

At S2 the chain carries N-acetylserine. The region spanning 26–114 is the PPIase FKBP-type domain; sequence GDLVTIHYTG…VFDVELLKVN (89 aa). Residue S51 is modified to Phosphoserine.

It belongs to the FKBP-type PPIase family. FKBP1 subfamily. As to quaternary structure, interacts with HOM3; the interaction is direct, plays a role in feedback inhibition of aspartokinase by threonine, and is inhibited by tacrolimus and sirolimus. Interacts with HMO1. Interacts with FAP1.

It is found in the cytoplasm. Its subcellular location is the mitochondrion. The enzyme catalyses [protein]-peptidylproline (omega=180) = [protein]-peptidylproline (omega=0). Its function is as follows. PPIases accelerate the folding of proteins. It catalyzes the cis-trans isomerization of proline imidic peptide bonds in oligopeptides. Plays a role in feedback inhibition of the pathway synthesizing the aspartate family of amino acids by binding to aspartokinase. The polypeptide is FK506-binding protein 1 (FPR1) (Saccharomyces cerevisiae (strain ATCC 204508 / S288c) (Baker's yeast)).